We begin with the raw amino-acid sequence, 205 residues long: Putative 3-methyladenine DNA glycosylase (205 aa).

The protein belongs to the DNA glycosylase MPG family.

This chain is Putative 3-methyladenine DNA glycosylase, found in Bacillus cereus (strain Q1).